The sequence spans 371 residues: Queuine tRNA-ribosyltransferase (371 aa).

The active-site Proton acceptor is the D90. Residues 90–94 (DSGGF), D144, Q188, and G215 contribute to the substrate site. The segment at 246–252 (GVGTPED) is RNA binding. Residue D265 is the Nucleophile of the active site. Residues 270–274 (TRNAR) form an RNA binding; important for wobble base 34 recognition region. Positions 303, 305, 308, and 334 each coordinate Zn(2+).

This sequence belongs to the queuine tRNA-ribosyltransferase family. As to quaternary structure, homodimer. Within each dimer, one monomer is responsible for RNA recognition and catalysis, while the other monomer binds to the replacement base PreQ1. Zn(2+) is required as a cofactor.

It catalyses the reaction 7-aminomethyl-7-carbaguanine + guanosine(34) in tRNA = 7-aminomethyl-7-carbaguanosine(34) in tRNA + guanine. It functions in the pathway tRNA modification; tRNA-queuosine biosynthesis. Catalyzes the base-exchange of a guanine (G) residue with the queuine precursor 7-aminomethyl-7-deazaguanine (PreQ1) at position 34 (anticodon wobble position) in tRNAs with GU(N) anticodons (tRNA-Asp, -Asn, -His and -Tyr). Catalysis occurs through a double-displacement mechanism. The nucleophile active site attacks the C1' of nucleotide 34 to detach the guanine base from the RNA, forming a covalent enzyme-RNA intermediate. The proton acceptor active site deprotonates the incoming PreQ1, allowing a nucleophilic attack on the C1' of the ribose to form the product. After dissociation, two additional enzymatic reactions on the tRNA convert PreQ1 to queuine (Q), resulting in the hypermodified nucleoside queuosine (7-(((4,5-cis-dihydroxy-2-cyclopenten-1-yl)amino)methyl)-7-deazaguanosine). The chain is Queuine tRNA-ribosyltransferase from Neisseria gonorrhoeae (strain ATCC 700825 / FA 1090).